The following is a 44-amino-acid chain: Tachystatin-A1 (44 aa).

Disulfide bonds link cysteine 4/cysteine 24, cysteine 11/cysteine 29, and cysteine 23/cysteine 41.

In terms of tissue distribution, granular hemocytes, small secretory granules.

The protein resides in the secreted. Exhibits stronger antimicrobial activity against the Gram-positive bacteria (S.aureus (IC(50) is 4.2 ug/ml)) and fungi (C.albicans (IC(50) is 3.0 ug/ml) and P.pastoris (IC(50) is 0.5 ug/ml)) than Gram-negative bacteria (E.coli (IC(50) is 25 ug/ml)). Binds to chitin (8.4 uM are required to obtain 50% of binding). Does not cause hemolysis on sheep erythrocytes. Has no blocking activity on the P-type calcium channel. The protein is Tachystatin-A1 of Tachypleus tridentatus (Japanese horseshoe crab).